The primary structure comprises 201 residues: Glycolipid transfer protein (201 aa).

The tract at residues 28–168 (IATTQFLEAC…KDFYAKLGDD (141 aa)) is glycolipid transfer protein homology domain.

In terms of biological role, cargo transport protein that plays a key role in transport and secretion of liamocins, glycolipids (also called heavy oils) composed of a single mannitol or arabitol headgroup linked to either three, four or even six 3,5-dihydroxydecanoic ester tail-groups. This Aureobasidium melanogenum (Aureobasidium pullulans var. melanogenum) protein is Glycolipid transfer protein.